Here is a 136-residue protein sequence, read N- to C-terminus: UPF0102 protein BBta_0181 (136 aa).

This sequence belongs to the UPF0102 family.

The sequence is that of UPF0102 protein BBta_0181 from Bradyrhizobium sp. (strain BTAi1 / ATCC BAA-1182).